Consider the following 421-residue polypeptide: Serine--tRNA ligase (421 aa).

229–231 (TAE) contacts L-serine. 260-262 (RAE) is a binding site for ATP. E283 lines the L-serine pocket. 347–350 (EISS) serves as a coordination point for ATP. S383 is an L-serine binding site.

The protein belongs to the class-II aminoacyl-tRNA synthetase family. Type-1 seryl-tRNA synthetase subfamily. Homodimer. The tRNA molecule binds across the dimer.

It is found in the cytoplasm. It catalyses the reaction tRNA(Ser) + L-serine + ATP = L-seryl-tRNA(Ser) + AMP + diphosphate + H(+). The enzyme catalyses tRNA(Sec) + L-serine + ATP = L-seryl-tRNA(Sec) + AMP + diphosphate + H(+). The protein operates within aminoacyl-tRNA biosynthesis; selenocysteinyl-tRNA(Sec) biosynthesis; L-seryl-tRNA(Sec) from L-serine and tRNA(Sec): step 1/1. Catalyzes the attachment of serine to tRNA(Ser). Is also able to aminoacylate tRNA(Sec) with serine, to form the misacylated tRNA L-seryl-tRNA(Sec), which will be further converted into selenocysteinyl-tRNA(Sec). This Desulfitobacterium hafniense (strain Y51) protein is Serine--tRNA ligase.